The following is a 494-amino-acid chain: GlcNAc-binding protein A (494 aa).

A signal peptide spans 1-21; it reads MKLNKIMLAMVVMSISGTAMA. One can recognise a Chitin-binding type-4 domain in the interval 22-192; it reads HGYIENPPSR…TFYNMIDAEF (171 aa). A Chitin-binding type-3 domain is found at 435 to 484; sequence APAWSNKSSYQAKDTVTHNGRIYMSKWWADKASVPGDAAVTDTTGNGSGW. Residues 474-494 are disordered; it reads VTDTTGNGSGWGKVWEDKGAC.

It belongs to the GbpA family.

The protein localises to the secreted. In terms of biological role, probably interacts with GlcNAc residues. May promote attachment to both epithelial cell surfaces and chitin. The sequence is that of GlcNAc-binding protein A from Yersinia enterocolitica serotype O:8 / biotype 1B (strain NCTC 13174 / 8081).